Reading from the N-terminus, the 475-residue chain is 23S rRNA (uracil(1939)-C(5))-methyltransferase RlmD (475 aa).

In terms of domain architecture, TRAM spans 1–76; the sequence is MHRGDKPVNI…SRFSKAKVRE (76 aa). 4 residues coordinate [4Fe-4S] cluster: cysteine 89, cysteine 95, cysteine 98, and cysteine 178. 6 residues coordinate S-adenosyl-L-methionine: glutamine 299, phenylalanine 328, asparagine 333, glutamate 349, aspartate 377, and aspartate 398. The Nucleophile role is filled by cysteine 431.

It belongs to the class I-like SAM-binding methyltransferase superfamily. RNA M5U methyltransferase family. RlmD subfamily.

The catalysed reaction is uridine(1939) in 23S rRNA + S-adenosyl-L-methionine = 5-methyluridine(1939) in 23S rRNA + S-adenosyl-L-homocysteine + H(+). Its function is as follows. Catalyzes the formation of 5-methyl-uridine at position 1939 (m5U1939) in 23S rRNA. This chain is 23S rRNA (uracil(1939)-C(5))-methyltransferase RlmD, found in Polynucleobacter necessarius subsp. necessarius (strain STIR1).